The following is a 934-amino-acid chain: UPF0182 protein sync_1321 (934 aa).

The next 9 helical transmembrane spans lie at 2-22, 45-65, 86-106, 129-149, 165-185, 208-228, 251-271, 300-320, and 327-347; these read AKIIWTIGRFGLLLIPLIVII, LLLQLGGALFAFLFVGSCALW, GYRYGFCLLACLLVLLSVLAI, FSTGWPLLSLSILMLTLIMFG, VCICLIVARSWGLWSLAFSIP, IAFGLELVLLQLSLTLSTALW, HGLRPGFALVLMSFSGLMWLS, LGSIALLVLAFVVLPSPFSSV, and LILAFIAIASFGLEMVLFPLM.

The protein belongs to the UPF0182 family.

Its subcellular location is the cell membrane. In Synechococcus sp. (strain CC9311), this protein is UPF0182 protein sync_1321.